Reading from the N-terminus, the 498-residue chain is ADP,ATP carrier protein 1 (498 aa).

Topologically, residues 1 to 33 (MSTSKSENYLSELRKIIWPIEQHENKKFLPLAF) are cytoplasmic. A helical membrane pass occupies residues 34–54 (MMFCILLNYSTLRSIKDGFVV). Cys37 and Cys85 are joined by a disulfide. Topologically, residues 55 to 67 (TDIGTESISFLKT) are extracellular. Residues 68–88 (YIVLPSAVIAMVIYVKLCDIL) traverse the membrane as a helical segment. The Cytoplasmic portion of the chain corresponds to 89–92 (KQEN). A helical membrane pass occupies residues 93 to 113 (IFYVITSFFLGYFALFAFVLY). At 114-147 (PYPDLVHPDHKTIESLSLAYPNFKWFIKIVGKWS) the chain is on the extracellular side. A helical membrane pass occupies residues 148 to 168 (FASFYTIAELWGTMMLSLLFW). At 169 to 184 (QFANQITKITEAKRFY) the chain is on the cytoplasmic side. Residues 185–205 (SMFGLLANLALPVTSVVIGYF) form a helical membrane-spanning segment. The Extracellular portion of the chain corresponds to 206-218 (LHEKTQIVSEHLK). The helical transmembrane segment at 219-239 (FIPLFVIMITSSFLIILTYRW) threads the bilayer. Topologically, residues 240–279 (MNKNVLTDPRLYDPTLVKEKKAKAKLSFIESFKMIFTSKY) are cytoplasmic. A helical transmembrane segment spans residues 280-300 (VGYIALLIIAYGVSVNLVEGV). The Extracellular segment spans residues 301-320 (WKSKVKELYPTKEAYTIYMG). The helical transmembrane segment at 321 to 341 (QFQFYQGWVAIAFMLIGSNIL) threads the bilayer. The Cytoplasmic segment spans residues 342–348 (RKVSWLT). A helical membrane pass occupies residues 349 to 369 (AAMITPLMMFITGAAFFSFIF). The Extracellular portion of the chain corresponds to 370–379 (FDSVIAMNLT). Residues 380–400 (GILASSPLTLAVMFGMIQNVL) traverse the membrane as a helical segment. Topologically, residues 401-438 (SKGVKYSLFDATKNMAYIPLDKDLRVKGQAAVEVIGGR) are cytoplasmic. 436–442 (GGRLGKS) is an ATP binding site. A helical membrane pass occupies residues 439–459 (LGKSGGAIIQSTFFILFPAFG). At 460-465 (FIEATP) the chain is on the extracellular side. The chain crosses the membrane as a helical span at residues 466–486 (YFASIFFIIVILWIFAVKGLN). At 487–498 (KEYQVLVNKNEN) the chain is on the cytoplasmic side.

It belongs to the ADP/ATP translocase tlc family.

Its subcellular location is the cell membrane. Its function is as follows. Provides the rickettsial cell with host ATP in exchange for rickettsial ADP. This is an obligate exchange system. This energy acquiring activity is an important component of rickettsial parasitism. The protein is ADP,ATP carrier protein 1 (tlcA) of Rickettsia typhi (strain ATCC VR-144 / Wilmington).